Consider the following 249-residue polypeptide: uncharacterized protein (249 aa).

Residues 1–36 (MAKSPARRCTAKVRRVLSRSVLILCWSLLGAAPAHA) form the signal peptide. The segment at 227-249 (ARQPPGRWVCPSSAGGPIGWHRQ) is disordered.

This is an uncharacterized protein from Mycobacterium tuberculosis (strain CDC 1551 / Oshkosh).